The chain runs to 162 residues: Disulfide bond formation protein B (162 aa).

Residues 1–8 lie on the Cytoplasmic side of the membrane; it reads MTPLFRKA. A helical membrane pass occupies residues 9–25; sequence VWLLFAVSVCAFAGSLA. The Periplasmic segment spans residues 26 to 43; the sequence is AQYVLGMEPCVLCISQRL. Cys-35 and Cys-38 are joined by a disulfide. The chain crosses the membrane as a helical span at residues 44-60; the sequence is CVLATALCAAIVLMCRP. The Cytoplasmic portion of the chain corresponds to 61-67; that stretch reads RRKAGGL. The chain crosses the membrane as a helical span at residues 68-85; it reads FGAVFISIPAVTGISVAA. At 86 to 141 the chain is on the periplasmic side; the sequence is YQLWLQSLPPGTAPSCGAPWTFRLKGWPLFDWFEPVVRGFGNCAEPDYLLGVALPV. The cysteines at positions 101 and 128 are disulfide-linked. A helical transmembrane segment spans residues 142–160; sequence WSVAYFLAVALTVWWAWAR. The Cytoplasmic segment spans residues 161–162; it reads AK.

It belongs to the DsbB family.

The protein localises to the cell inner membrane. Functionally, required for disulfide bond formation in some periplasmic proteins. Acts by oxidizing the DsbA protein. The sequence is that of Disulfide bond formation protein B from Neisseria meningitidis serogroup A / serotype 4A (strain DSM 15465 / Z2491).